The primary structure comprises 302 residues: Aspartate carbamoyltransferase catalytic subunit (302 aa).

Carbamoyl phosphate is bound by residues R51 and T52. Position 80 (K80) interacts with L-aspartate. 3 residues coordinate carbamoyl phosphate: R101, H129, and Q132. Positions 162 and 223 each coordinate L-aspartate. Residues L261 and P262 each coordinate carbamoyl phosphate.

The protein belongs to the aspartate/ornithine carbamoyltransferase superfamily. ATCase family. As to quaternary structure, heterododecamer (2C3:3R2) of six catalytic PyrB chains organized as two trimers (C3), and six regulatory PyrI chains organized as three dimers (R2).

It carries out the reaction carbamoyl phosphate + L-aspartate = N-carbamoyl-L-aspartate + phosphate + H(+). It functions in the pathway pyrimidine metabolism; UMP biosynthesis via de novo pathway; (S)-dihydroorotate from bicarbonate: step 2/3. Functionally, catalyzes the condensation of carbamoyl phosphate and aspartate to form carbamoyl aspartate and inorganic phosphate, the committed step in the de novo pyrimidine nucleotide biosynthesis pathway. This Chromobacterium violaceum (strain ATCC 12472 / DSM 30191 / JCM 1249 / CCUG 213 / NBRC 12614 / NCIMB 9131 / NCTC 9757 / MK) protein is Aspartate carbamoyltransferase catalytic subunit.